The chain runs to 361 residues: Phospho-N-acetylmuramoyl-pentapeptide-transferase (361 aa).

10 helical membrane passes run 26–46 (SILA…VLIQ), 73–93 (TMGG…WGDL), 98–118 (VWLV…DDWI), 139–159 (IFGL…AAVT), 168–188 (IALP…IVGF), 200–220 (GLAI…AYAS), 237–257 (AGDL…FLWF), 264–284 (VFMG…IAVI), 289–309 (LVLV…IIQV), and 339–359 (VIVR…ATLK).

It belongs to the glycosyltransferase 4 family. MraY subfamily. Mg(2+) serves as cofactor.

The protein resides in the cell inner membrane. It catalyses the reaction UDP-N-acetyl-alpha-D-muramoyl-L-alanyl-gamma-D-glutamyl-meso-2,6-diaminopimeloyl-D-alanyl-D-alanine + di-trans,octa-cis-undecaprenyl phosphate = di-trans,octa-cis-undecaprenyl diphospho-N-acetyl-alpha-D-muramoyl-L-alanyl-D-glutamyl-meso-2,6-diaminopimeloyl-D-alanyl-D-alanine + UMP. Its pathway is cell wall biogenesis; peptidoglycan biosynthesis. Its function is as follows. Catalyzes the initial step of the lipid cycle reactions in the biosynthesis of the cell wall peptidoglycan: transfers peptidoglycan precursor phospho-MurNAc-pentapeptide from UDP-MurNAc-pentapeptide onto the lipid carrier undecaprenyl phosphate, yielding undecaprenyl-pyrophosphoryl-MurNAc-pentapeptide, known as lipid I. The protein is Phospho-N-acetylmuramoyl-pentapeptide-transferase of Xylella fastidiosa (strain M12).